Here is a 424-residue protein sequence, read N- to C-terminus: Transcription regulator spe-44 (424 aa).

The SAND domain maps to Pro-65–Asp-150. Disordered regions lie at residues Ala-178–Gln-228 and Glu-371–Phe-394. The segment covering Tyr-192–Lys-210 has biased composition (basic and acidic residues). Over residues Pro-378–Leu-388 the composition is skewed to polar residues.

It is found in the chromosome. The protein resides in the nucleus. Its function is as follows. Transcription factor which controls spermatogenesis and sperm cell fate by regulation of sperm gene expression. The protein is Transcription regulator spe-44 of Caenorhabditis elegans.